A 96-amino-acid polypeptide reads, in one-letter code: UPF0184 protein CG14818 (96 aa).

Disordered regions lie at residues 1–28 (MSPKNNHDPSSSGDSGNTNVQEADLQEM) and 70–96 (IAEENDNAPESGDDNMDGQAGSEAAPK). Over residues 8-21 (DPSSSGDSGNTNVQ) the composition is skewed to polar residues. The stretch at 21–77 (QEADLQEMEDVNNSLDALSCALDAVEQRTDDIMSQLRELLNSNREIRRLIAEENDNA) forms a coiled coil. Residues 72–85 (EENDNAPESGDDNM) show a composition bias toward acidic residues.

It belongs to the UPF0184 (EST00098) family.

The chain is UPF0184 protein CG14818 from Drosophila melanogaster (Fruit fly).